Reading from the N-terminus, the 360-residue chain is Histidinol-phosphate aminotransferase (360 aa).

Lys-223 is modified (N6-(pyridoxal phosphate)lysine).

The protein belongs to the class-II pyridoxal-phosphate-dependent aminotransferase family. Histidinol-phosphate aminotransferase subfamily. In terms of assembly, homodimer. Requires pyridoxal 5'-phosphate as cofactor.

It catalyses the reaction L-histidinol phosphate + 2-oxoglutarate = 3-(imidazol-4-yl)-2-oxopropyl phosphate + L-glutamate. The protein operates within amino-acid biosynthesis; L-histidine biosynthesis; L-histidine from 5-phospho-alpha-D-ribose 1-diphosphate: step 7/9. The polypeptide is Histidinol-phosphate aminotransferase (Bacillus velezensis (strain DSM 23117 / BGSC 10A6 / LMG 26770 / FZB42) (Bacillus amyloliquefaciens subsp. plantarum)).